Reading from the N-terminus, the 160-residue chain is Putative 4-hydroxy-4-methyl-2-oxoglutarate aldolase (160 aa).

Substrate-binding positions include 78-81 (GDVI) and Arg-100. Asp-101 contributes to the a divalent metal cation binding site.

It belongs to the class II aldolase/RraA-like family. In terms of assembly, homotrimer. A divalent metal cation is required as a cofactor.

The enzyme catalyses 4-hydroxy-4-methyl-2-oxoglutarate = 2 pyruvate. It catalyses the reaction oxaloacetate + H(+) = pyruvate + CO2. Catalyzes the aldol cleavage of 4-hydroxy-4-methyl-2-oxoglutarate (HMG) into 2 molecules of pyruvate. Also contains a secondary oxaloacetate (OAA) decarboxylase activity due to the common pyruvate enolate transition state formed following C-C bond cleavage in the retro-aldol and decarboxylation reactions. This chain is Putative 4-hydroxy-4-methyl-2-oxoglutarate aldolase, found in Mycolicibacterium vanbaalenii (strain DSM 7251 / JCM 13017 / BCRC 16820 / KCTC 9966 / NRRL B-24157 / PYR-1) (Mycobacterium vanbaalenii).